We begin with the raw amino-acid sequence, 246 residues long: Exosome complex component Rrp41 (246 aa).

It belongs to the RNase PH family. Rrp41 subfamily. Component of the archaeal exosome complex. Forms a hexameric ring-like arrangement composed of 3 Rrp41-Rrp42 heterodimers. The hexameric ring associates with a trimer of Rrp4 and/or Csl4 subunits.

The protein localises to the cytoplasm. Functionally, catalytic component of the exosome, which is a complex involved in RNA degradation. Has 3'-&gt;5' exoribonuclease activity. Can also synthesize heteromeric RNA-tails. This chain is Exosome complex component Rrp41, found in Aeropyrum pernix (strain ATCC 700893 / DSM 11879 / JCM 9820 / NBRC 100138 / K1).